A 2542-amino-acid polypeptide reads, in one-letter code: Probable polyketide synthase 41 (2542 aa).

Residues 11–441 (CNKVAIIGIG…GSNCCLIVSS (431 aa)) enclose the Ketosynthase family 3 (KS3) domain. Catalysis depends on for beta-ketoacyl synthase activity residues cysteine 177, histidine 318, and histidine 360. Residues 628-661 (GIKPSIIVGHSLGEISSSYCSGMIDLDTFCYLIY) form an acyl/malonyl transferase region. Serine 638 acts as the For acyl/malonyl transferase activity in catalysis. The N-terminal hotdog fold stretch occupies residues 926-1059 (INHLGISNSN…ANFQLFSRGP (134 aa)). The region spanning 926–1231 (INHLGISNSN…FKSTTKIKDP (306 aa)) is the PKS/mFAS DH domain. The active-site Proton acceptor; for dehydratase activity is the histidine 959. The segment at 1083 to 1231 (NLTKLSKQEL…FKSTTKIKDP (149 aa)) is C-terminal hotdog fold. The Proton donor; for dehydratase activity role is filled by aspartate 1145. Residues 2459-2537 (NVELTVDQLI…SFIQLVKNSM (79 aa)) enclose the Carrier domain. An O-(pantetheine 4'-phosphoryl)serine modification is found at serine 2496.

Pantetheine 4'-phosphate serves as cofactor.

Probable polyketide synthase. This Dictyostelium discoideum (Social amoeba) protein is Probable polyketide synthase 41 (pks41).